We begin with the raw amino-acid sequence, 430 residues long: Glutamyl-tRNA reductase 1 (430 aa).

Substrate is bound by residues 49–52 (TCNR), Ser109, 114–116 (EGQ), and Gln120. Residue Cys50 is the Nucleophile of the active site. An NADP(+)-binding site is contributed by 189 to 194 (GAGSMA).

The protein belongs to the glutamyl-tRNA reductase family. As to quaternary structure, homodimer.

The catalysed reaction is (S)-4-amino-5-oxopentanoate + tRNA(Glu) + NADP(+) = L-glutamyl-tRNA(Glu) + NADPH + H(+). It participates in porphyrin-containing compound metabolism; protoporphyrin-IX biosynthesis; 5-aminolevulinate from L-glutamyl-tRNA(Glu): step 1/2. Functionally, catalyzes the NADPH-dependent reduction of glutamyl-tRNA(Glu) to glutamate 1-semialdehyde (GSA). This chain is Glutamyl-tRNA reductase 1, found in Nocardioides sp. (strain ATCC BAA-499 / JS614).